The chain runs to 142 residues: uncharacterized protein (142 aa).

Residues 1 to 22 (MSGSVNQNTDQHSQDSSSTPNN) are disordered. 2 helical membrane passes run 63-83 (LFVMYMIVQVSYYIVPFVLLV) and 109-129 (IIDGIIGVLQFIFWFWIFVDL).

It is found in the membrane. This is an uncharacterized protein from Acanthamoeba polyphaga mimivirus (APMV).